Reading from the N-terminus, the 603-residue chain is Leucine-rich repeat-containing protein 40 (603 aa).

Positions 1–27 are disordered; that stretch reads MAAARRARAGDPRAGFRRAAEEQSPAV. 20 LRR repeats span residues 83–104, 106–127, 129–150, 152–173, 175–196, 198–219, 221–242, 244–265, 266–286, 290–311, 313–335, 336–357, 401–422, 427–449, 451–473, 474–495, 497–518, 520–541, 544–565, and 567–588; these read DLTKLILASNQLRCLSEDVRLL, ALTVLDVHDNQLTSLPSALGQL, NLQKLDVSHNKLKSIPEELLQL, HLKGLLLQHNELSHLPDGFGQL, SLEELDLSNNHLTDIPKSFALL, NLVRLNLACNQLKDLPADISAM, SLRQLDCTKNYLESVPSELASM, SLEQLYLRKNKLRSLPELPSCK, LLKELHAGENQIEILNAENLK, SLSVLELRDNKIKSVPDEITLL, KLERLDLANNDISRLPYTLGNLS, QLKFLALEGNPLRTIRRDLLQK, TLKLLDYSEKQVAVIPDDVFSA, PVTSVNFSKNQLTAIPPRIVELK, SVCDVNFGFNKISSVSLELCTLH, KLTHLDIRNNVLTSLPEEMEAL, RLQVINLSFNRFKVFPSVLYRM, ALETILLSNNQVGSIDPLQLKK, QLGTLDLQNNDLLQVPPELGNC, and TLRTLLLEGNPFRTPRAAILAK.

This chain is Leucine-rich repeat-containing protein 40 (LRRC40), found in Gallus gallus (Chicken).